The primary structure comprises 182 residues: Inner membrane-spanning protein YciB (182 aa).

5 helical membrane-spanning segments follow: residues 20–42 (GGIY…WVYY), 55–75 (LIMI…TFIL), 76–96 (LKPT…AQFF), 123–143 (LNLA…YIAF), and 153–173 (FKLF…GFWM).

The protein belongs to the YciB family.

The protein localises to the cell inner membrane. Functionally, plays a role in cell envelope biogenesis, maintenance of cell envelope integrity and membrane homeostasis. This is Inner membrane-spanning protein YciB from Polynucleobacter asymbioticus (strain DSM 18221 / CIP 109841 / QLW-P1DMWA-1) (Polynucleobacter necessarius subsp. asymbioticus).